Consider the following 364-residue polypeptide: Transcription factor SPEECHLESS (364 aa).

A disordered region spans residues 35-109 (GEISPTAAST…QKMSHVTVER (75 aa)). The residue at position 38 (Ser-38) is a Phosphoserine; by ASK7. Position 40 is a phosphothreonine; by ASK7 (Thr-40). Over residues 40 to 53 (TAASTPKDGTTSSK) the composition is skewed to polar residues. Residue Ser-43 is modified to Phosphoserine; by ASK7. At Thr-44 the chain carries Phosphothreonine; by ASK7. Phosphoserine; by ASK7 is present on Ser-65. Acidic residues predominate over residues 79–92 (EDEEEEDGDGEAEE). The tract at residues 99 to 112 (QQKMSHVTVERNRR) is basic motif. Positions 99–150 (QQKMSHVTVERNRRKQMNEHLTVLRSLMPCFYVKRGDQASIIGGVVEYISEL) constitute a bHLH domain. Residues 113-150 (KQMNEHLTVLRSLMPCFYVKRGDQASIIGGVVEYISEL) form a helix-loop-helix motif region. At Ser-171 the chain carries Phosphoserine; by ASK7. A disordered region spans residues 171-227 (SPRVVPSPRPSPPVLSPRKPPLSPRINHHQIHHHLLLPPISPRTPQPTSPYRAIPPQ). Pro residues predominate over residues 175-193 (VPSPRPSPPVLSPRKPPLS). Phosphoserine; by ASK7, MPK3 and MPK6 is present on Ser-177. Position 181 is a phosphoserine; by ASK7 (Ser-181). Ser-186 bears the Phosphoserine; by CDKA-1, ASK7, MPK3 and MPK6 mark. The residue at position 193 (Ser-193) is a Phosphoserine; by MPK3 and MPK6. Residues 196 to 205 (INHHQIHHHL) show a composition bias toward basic residues. A compositionally biased stretch (pro residues) spans 209-218 (PISPRTPQPT). Residue Ser-211 is modified to Phosphoserine; by MPK3 and MPK6. Thr-214 carries the phosphothreonine; by ASK7, MPK3 and MPK6 modification. A Phosphoserine; by ASK7, MPK3 and MPK6 modification is found at Ser-219.

Homodimer. Forms dimers with SCRM and SCRM2. May interact with CDKA-1. Post-translationally, phosphorylated by ASK7/BIN2 and ASK3/SK12; this post-translational modification inhibits activity and limit epidermal cell proliferation. Phosphorylation by MPK3 and MPK6 leads to the inhibition of stomatal fate and to degradation. Stabilized by CDKA-1-mediated phosphorylation at Ser-186 which promotes stomatal development. Expressed in developing leaf epidermis. Reduced accumulation in the stomatal lineage ground cells (SLGCs) where BASL is polarized in the cell cortex. Observed in small cells of non-protruding hypocotyl cell files and of developing cotyledon epidermis. Restricted to meristemoids (stomatal precursor cell) in leaves epidermis, mostly in dividing cells of non-protruding cell files.

It localises to the nucleus. Negatively regulated through phosphorylation by the MAPK module. Activity is constrained by polarized BASL in stomatal lineage ground cells (SLGCs) undergoing ACD. Transcription factor acting as an integration node for stomata and brassinosteroid (BR) signaling pathways to control stomatal initiation and development. Activates transcription when in the presence of SCRM/ICE1. Functions as a dimer with SCRM or SCRM2 during stomatal initiation. Required for the initiation, the spacing and the formation of stomata, by promoting the first asymmetric cell divisions. Together with FMA and MUTE, modulates the stomata formation. Involved in the regulation of growth reduction under osmotic stress (e.g. mannitol), associated with a quick decrease of meristemoid mother cells (MMCs) number lower stomatal index and density. This is Transcription factor SPEECHLESS from Arabidopsis thaliana (Mouse-ear cress).